A 689-amino-acid chain; its full sequence is Outer spore wall assembly protein SHE10 (689 aa).

Residues 1–18 (MKILTKFFLLLVVTTCSL) form the signal peptide. Residues 259-308 (TKAKSKSKPRVNASASARGNARAGAKAGAKAGTSEISASATADPTTSASA) are disordered. Over residues 270–308 (NASASARGNARAGAKAGAKAGTSEISASATADPTTSASA) the composition is skewed to low complexity. Residues 406 to 435 (NKTKTVSEVLQNRYKNLNRAIQDINCTCET) are a coiled coil. Basic and acidic residues predominate over residues 610–626 (EQESKQREDSPRMDRDS). The disordered stretch occupies residues 610–689 (EQESKQREDS…TVQNNVTLQI (80 aa)). Polar residues-rich tracts occupy residues 627-637 (TQNVENSNTTT), 655-670 (QNGTNSTEKFSAGPDS), and 677-689 (METTVQNNVTLQI).

The protein belongs to the SHE10 family. In terms of assembly, component of the mitochondria-localized RNase mitochondrial RNA-processing (RNase MRP) composed of one single RNA encoded by the NME1 gene and at least 31 proteins. Absent in the nucleus-localized RNase MRP (NuMRP).

It localises to the mitochondrion. Its function is as follows. Involved in spore wall assembly. May be a component of the mitochondrial RNase MRP (MtMRP), a ribonucleoprotein endoribonuclease involved in the cleaving RNA transcripts to generate primers for DNA replication in mitochondria. In Zygosaccharomyces rouxii (strain ATCC 2623 / CBS 732 / NBRC 1130 / NCYC 568 / NRRL Y-229), this protein is Outer spore wall assembly protein SHE10.